Reading from the N-terminus, the 109-residue chain is Large ribosomal subunit protein P1C (109 aa).

A compositionally biased stretch (low complexity) spans 68–83; it reads ASAPTAAGAGAAAPAE. Positions 68–109 are disordered; the sequence is ASAPTAAGAGAAAPAEAAEEEKKEEAKEEEESDEDMGFGLFD. The segment covering 94-103 has biased composition (acidic residues); it reads KEEEESDEDM. Serine 99 carries the post-translational modification Phosphoserine.

This sequence belongs to the eukaryotic ribosomal protein P1/P2 family. As to quaternary structure, component of the large ribosomal subunit (LSU). Mature yeast ribosomes consist of a small (40S) and a large (60S) subunit. The 40S small subunit contains 1 molecule of ribosomal RNA (18S rRNA) and at least 33 different proteins. The large 60S subunit contains 3 rRNA molecules (25S, 5.8S and 5S rRNA) and at least 46 different proteins. The acidic ribosomal P-proteins form the stalk structure of the 60S subunit. They are organized as a pentameric complex in which uL10/P0 interacts with 2 heterodimers of P1 and P2 proteins.

It is found in the cytoplasm. Its function is as follows. Component of the ribosome, a large ribonucleoprotein complex responsible for the synthesis of proteins in the cell. The small ribosomal subunit (SSU) binds messenger RNAs (mRNAs) and translates the encoded message by selecting cognate aminoacyl-transfer RNA (tRNA) molecules. The large subunit (LSU) contains the ribosomal catalytic site termed the peptidyl transferase center (PTC), which catalyzes the formation of peptide bonds, thereby polymerizing the amino acids delivered by tRNAs into a polypeptide chain. The nascent polypeptides leave the ribosome through a tunnel in the LSU and interact with protein factors that function in enzymatic processing, targeting, and the membrane insertion of nascent chains at the exit of the ribosomal tunnel. This is Large ribosomal subunit protein P1C (rpp103) from Schizosaccharomyces pombe (strain 972 / ATCC 24843) (Fission yeast).